The primary structure comprises 1284 residues: Zinc finger protein 423 (1284 aa).

2 disordered regions span residues 1 to 64 (MHKK…MEDE) and 87 to 117 (AHRC…SPTQ). The segment covering 34–46 (CDQKTSRALEDRN) has biased composition (basic and acidic residues). Residues S47 and S50 each carry the phosphoserine modification. Over residues 54–64 (RNEDDEDMEDE) the composition is skewed to acidic residues. Residues 67–93 (YTCDHCQQDFESLADLTDHRAHRCPGD) form a C2H2-type 1; degenerate zinc finger. Positions 102–117 (WVASSPSSKDVASPTQ) are enriched in polar residues. 7 C2H2-type zinc fingers span residues 138 to 160 (YPCQ…EQIH), 166 to 188 (FKCT…IKLH), 194 to 216 (YHCH…LKTH), 222 to 244 (FKCT…MQAH), 263 to 286 (FMCD…LTRH), 295 to 318 (LQCI…HQAH), and 323 to 345 (HKCP…LDSH). The disordered stretch occupies residues 346-398 (RQPDSSNHSVSPDPVLGSVASMSSATPDSSASVERGSTPDSTLKPLRGQKKMR). Positions 363-377 (SVASMSSATPDSSAS) are enriched in low complexity. The C2H2-type 9; degenerate zinc-finger motif lies at 409 to 433 (YSCPYCSKRDFNSLAVLEIHLKTIH). 3 consecutive C2H2-type zinc fingers follow at residues 441 to 464 (HTCQ…RKLH), 480 to 503 (FHCN…RVSH), and 517 to 540 (FFCN…QQAH). A C2H2-type 13; atypical zinc finger spans residues 563-588 (YSCPYCTNSPIFGSILKLTKHIKENH). Positions 590–624 (NIPLAHSKKSKAEQSPVSSDVEVSSPKRQRLSASA) are disordered. S604 bears the Phosphoserine mark. The span at 604-615 (SPVSSDVEVSSP) shows a compositional bias: low complexity. 7 C2H2-type zinc fingers span residues 632–654 (YPCN…LKLH), 662–684 (QACP…LTVH), 692–715 (YVCE…LDMH), 720–743 (YHCT…AVKH), 750–773 (YRCT…KHSH), 781–803 (HKCI…ITTH), and 807–830 (YNCK…REKH). A C2H2-type 21; degenerate zinc finger spans residues 886–908 (YGCDICGAAYTMEVLLQNHRLRD). 3 consecutive C2H2-type zinc fingers follow at residues 930 to 952 (HKCN…LQTH), 959 to 981 (YMCP…KVTH), and 1020 to 1042 (FRCV…GTFH). S1054 is subject to Phosphoserine. The segment at 1064 to 1082 (YKCALCLKEFRSKQDLVKL) adopts a C2H2-type 25; degenerate zinc-finger fold. 5 C2H2-type zinc fingers span residues 1120–1143 (LRCP…QVDH), 1168–1190 (YQCI…VANH), 1198–1220 (HECK…LIEH), 1229–1252 (FKCP…FAVH), and 1259–1282 (YDCS…MSQH). Over residues 1136–1147 (ESHMQVDHRDLT) the composition is skewed to basic and acidic residues. The disordered stretch occupies residues 1136 to 1163 (ESHMQVDHRDLTPETSGPRKGTQTSPVP).

This sequence belongs to the krueppel C2H2-type zinc-finger protein family. Homodimer. Interacts with EBF1. Interacts with SMAD1 and SMAD4. Interacts with PARP1. Interacts with CEP290. In terms of tissue distribution, expressed in brain, lung, skeletal muscle, heart, pancreas and kidney but not liver or placenta. Also expressed in aorta, ovary, pituitary, small intestine, fetal brain, fetal kidney and, within the adult brain, in the substantia nigra, medulla, amygdala, thalamus and cerebellum.

It localises to the nucleus. Functionally, transcription factor that can both act as an activator or a repressor depending on the context. Plays a central role in BMP signaling and olfactory neurogenesis. Associates with SMADs in response to BMP2 leading to activate transcription of BMP target genes. Acts as a transcriptional repressor via its interaction with EBF1, a transcription factor involved in terminal olfactory receptor neurons differentiation; this interaction preventing EBF1 to bind DNA and activate olfactory-specific genes. Involved in olfactory neurogenesis by participating in a developmental switch that regulates the transition from differentiation to maturation in olfactory receptor neurons. Controls proliferation and differentiation of neural precursors in cerebellar vermis formation. This Homo sapiens (Human) protein is Zinc finger protein 423 (ZNF423).